The primary structure comprises 83 residues: NAD(P)H-quinone oxidoreductase subunit L (83 aa).

Transmembrane regions (helical) follow at residues 15–35 (LMVL…VPLL) and 53–73 (LSAY…APFL).

Belongs to the complex I NdhL subunit family. In terms of assembly, NDH-1 can be composed of about 15 different subunits; different subcomplexes with different compositions have been identified which probably have different functions.

It localises to the cellular thylakoid membrane. It catalyses the reaction a plastoquinone + NADH + (n+1) H(+)(in) = a plastoquinol + NAD(+) + n H(+)(out). The enzyme catalyses a plastoquinone + NADPH + (n+1) H(+)(in) = a plastoquinol + NADP(+) + n H(+)(out). Its function is as follows. NDH-1 shuttles electrons from an unknown electron donor, via FMN and iron-sulfur (Fe-S) centers, to quinones in the respiratory and/or the photosynthetic chain. The immediate electron acceptor for the enzyme in this species is believed to be plastoquinone. Couples the redox reaction to proton translocation, and thus conserves the redox energy in a proton gradient. Cyanobacterial NDH-1 also plays a role in inorganic carbon-concentration. This is NAD(P)H-quinone oxidoreductase subunit L from Prochlorococcus marinus (strain MIT 9303).